Reading from the N-terminus, the 199-residue chain is MTEYKPTVRLATRDDVPRAVRTLAAAFADYPATRHTVDPDRHIERVTELQELFLTRVGLDIGKVWVADDGAAVAVWTTPESVEAGAVFAEIGPRMAELSGSRLAAQQQMEGLLAPHRPKEPAWFLATVGVSPDHQGKGLGSAVVLPGVEAAERAGVPAFLETSAPRNLPFYERLGFTVTADVEVPEGPRTWCMTRKPGA.

Residues 6–198 (PTVRLATRDD…RTWCMTRKPG (193 aa)) form the N-acetyltransferase domain.

Its function is as follows. Detoxification of puromycin. The protein is Puromycin N-acetyltransferase (pac) of Streptomyces alboniger.